Here is a 194-residue protein sequence, read N- to C-terminus: uncharacterized protein (194 aa).

Residues 6–66 (SGKYEKILQA…AIAENLLTHT (61 aa)) form the HTH tetR-type domain. Residues 29–48 (SISDIVKKAGTAQGTFYLYF) constitute a DNA-binding region (H-T-H motif).

This is an uncharacterized protein from Bacillus subtilis (strain 168).